The primary structure comprises 265 residues: S-adenosylmethionine decarboxylase proenzyme (265 aa).

The active-site Schiff-base intermediate with substrate; via pyruvic acid is the Ser114. Residue Ser114 is modified to Pyruvic acid (Ser); by autocatalysis. His119 (proton acceptor; for processing activity) is an active-site residue. Residue Cys142 is the Proton donor; for catalytic activity of the active site.

It belongs to the prokaryotic AdoMetDC family. Type 2 subfamily. As to quaternary structure, heterooctamer of four alpha and four beta chains arranged as a tetramer of alpha/beta heterodimers. Requires pyruvate as cofactor. In terms of processing, is synthesized initially as an inactive proenzyme. Formation of the active enzyme involves a self-maturation process in which the active site pyruvoyl group is generated from an internal serine residue via an autocatalytic post-translational modification. Two non-identical subunits are generated from the proenzyme in this reaction, and the pyruvate is formed at the N-terminus of the alpha chain, which is derived from the carboxyl end of the proenzyme. The post-translation cleavage follows an unusual pathway, termed non-hydrolytic serinolysis, in which the side chain hydroxyl group of the serine supplies its oxygen atom to form the C-terminus of the beta chain, while the remainder of the serine residue undergoes an oxidative deamination to produce ammonia and the pyruvoyl group blocking the N-terminus of the alpha chain.

It carries out the reaction S-adenosyl-L-methionine + H(+) = S-adenosyl 3-(methylsulfanyl)propylamine + CO2. It participates in amine and polyamine biosynthesis; S-adenosylmethioninamine biosynthesis; S-adenosylmethioninamine from S-adenosyl-L-methionine: step 1/1. Functionally, catalyzes the decarboxylation of S-adenosylmethionine to S-adenosylmethioninamine (dcAdoMet), the propylamine donor required for the synthesis of the polyamines spermine and spermidine from the diamine putrescine. The polypeptide is S-adenosylmethionine decarboxylase proenzyme (Buchnera aphidicola subsp. Acyrthosiphon pisum (strain APS) (Acyrthosiphon pisum symbiotic bacterium)).